A 1457-amino-acid chain; its full sequence is Eye-specific diacylglycerol kinase (1457 aa).

Disordered stretches follow at residues 1–123 (MQQQ…SSEA), 136–177 (RSHS…PPCI), and 207–339 (YSNT…QPTT). Composition is skewed to low complexity over residues 22 to 62 (SATT…LRTT), 98 to 115 (SQRA…SSAS), and 141 to 154 (DSAT…DSGT). Positions 214–253 (ASEDEDEVEGHNAEEEEEGSAAIEDAEEETTEAATEEADE) are enriched in acidic residues. Over residues 254–266 (DPRTEVESEHDHD) the composition is skewed to basic and acidic residues. Residues 294–303 (RLPRQMRRHT) show a composition bias toward basic residues. 2 Phorbol-ester/DAG-type zinc fingers span residues 591 to 641 (HYWK…TLAC) and 661 to 724 (HHWV…GEEC). A disordered region spans residues 758–799 (NNAASGSGGGGAGGGAGGGGGKSKKQTQRRQKGKEEKKEPRA). Over residues 763 to 778 (GSGGGGAGGGAGGGGG) the composition is skewed to gly residues. Residues 779-789 (KSKKQTQRRQK) are compositionally biased toward basic residues. Positions 808 to 944 (PEVIPVIVFI…MDRWRVKVTP (137 aa)) constitute a DAGKc domain. A disordered region spans residues 1264–1302 (TPDQERSFAAFSQRQAQNERRQMDQAQGRGPGSTDEDLQ). ANK repeat units lie at residues 1320 to 1349 (QTSD…SLQS), 1353 to 1382 (NGQT…RRLI), 1389 to 1418 (LGQT…HLDT), and 1422 to 1451 (GGNT…TQPV).

This sequence belongs to the eukaryotic diacylglycerol kinase family. In terms of tissue distribution, expressed specifically in adult eye.

The protein localises to the membrane. The catalysed reaction is a 1,2-diacyl-sn-glycerol + ATP = a 1,2-diacyl-sn-glycero-3-phosphate + ADP + H(+). Its function is as follows. Required for the maintenance of phospholipid turnover within the photoreceptor. In Drosophila melanogaster (Fruit fly), this protein is Eye-specific diacylglycerol kinase (rdgA).